The following is a 327-amino-acid chain: uncharacterized protein (327 aa).

The N-terminal stretch at 1-24 is a signal peptide; that stretch reads MKQPGFIRLATLALLSTLSFFSHG.

This is an uncharacterized protein from Salmonella typhimurium (strain LT2 / SGSC1412 / ATCC 700720).